We begin with the raw amino-acid sequence, 732 residues long: 1,4-alpha-glucan branching enzyme GlgB (732 aa).

Aspartate 408 serves as the catalytic Nucleophile. Glutamate 461 serves as the catalytic Proton donor.

The protein belongs to the glycosyl hydrolase 13 family. GlgB subfamily. Monomer.

It catalyses the reaction Transfers a segment of a (1-&gt;4)-alpha-D-glucan chain to a primary hydroxy group in a similar glucan chain.. The protein operates within glycan biosynthesis; glycogen biosynthesis. Catalyzes the formation of the alpha-1,6-glucosidic linkages in glycogen by scission of a 1,4-alpha-linked oligosaccharide from growing alpha-1,4-glucan chains and the subsequent attachment of the oligosaccharide to the alpha-1,6 position. This Rhodococcus jostii (strain RHA1) protein is 1,4-alpha-glucan branching enzyme GlgB.